The sequence spans 740 residues: Ion-translocating oxidoreductase complex subunit C (740 aa).

4Fe-4S ferredoxin-type domains lie at 369-397 (GEPQ…QQLY) and 407-436 (KATT…VQYF). The [4Fe-4S] cluster site is built by C377, C380, C383, C387, C416, C419, C422, and C426. Residues 602 to 716 (KLEQQQANAE…EPEEQVDPRK (115 aa)) are disordered.

This sequence belongs to the 4Fe4S bacterial-type ferredoxin family. RnfC subfamily. The complex is composed of six subunits: RsxA, RsxB, RsxC, RsxD, RsxE and RsxG. [4Fe-4S] cluster is required as a cofactor.

Its subcellular location is the cell inner membrane. Part of a membrane-bound complex that couples electron transfer with translocation of ions across the membrane. Required to maintain the reduced state of SoxR. In Escherichia coli (strain SE11), this protein is Ion-translocating oxidoreductase complex subunit C.